The chain runs to 205 residues: Protease (205 aa).

Residues histidine 54, aspartate 71, and cysteine 120 contribute to the active site.

This sequence belongs to the peptidase C5 family. Interacts with protease cofactor pVI-C; this interaction is necessary for protease activation.

The protein resides in the virion. It is found in the host nucleus. The catalysed reaction is Cleaves proteins of the adenovirus and its host cell at two consensus sites: -Yaa-Xaa-Gly-Gly-|-Xaa- and -Yaa-Xaa-Gly-Xaa-|-Gly- (in which Yaa is Met, Ile or Leu, and Xaa is any amino acid).. Its activity is regulated as follows. Requires DNA and protease cofactor for maximal activation. Inside nascent virions, becomes partially activated by binding to the viral DNA, allowing it to cleave the cofactor that binds to the protease and fully activates it. Actin, like the viral protease cofactor, seems to act as a cofactor in the cleavage of cytokeratin 18 and of actin itself. Its function is as follows. Cleaves viral precursor proteins (pTP, pIIIa, pVI, pVII, pVIII, and pX) inside newly assembled particles giving rise to mature virions. Protease complexed to its cofactor slides along the viral DNA to specifically locate and cleave the viral precursors. Mature virions have a weakened organization compared to the unmature virions, thereby facilitating subsequent uncoating. Without maturation, the particle lacks infectivity and is unable to uncoat. Late in adenovirus infection, in the cytoplasm, may participate in the cytoskeleton destruction. Cleaves host cell cytoskeletal keratins K7 and K18. In Bos taurus (Bovine), this protein is Protease.